The sequence spans 235 residues: Thiopurine S-methyltransferase (235 aa).

Positions 13, 48, 69, and 126 each coordinate S-adenosyl-L-methionine. The tract at residues 199–235 is disordered; that stretch reads PDPQNGAPRRVEHKVYQLTGKRPASPEADGRAAETED. Basic and acidic residues predominate over residues 226-235; it reads ADGRAAETED.

It belongs to the class I-like SAM-binding methyltransferase superfamily. TPMT family.

It localises to the cytoplasm. It carries out the reaction S-adenosyl-L-methionine + a thiopurine = S-adenosyl-L-homocysteine + a thiopurine S-methylether.. This chain is Thiopurine S-methyltransferase, found in Stutzerimonas stutzeri (strain A1501) (Pseudomonas stutzeri).